The primary structure comprises 457 residues: Guanine nucleotide-binding protein subunit alpha homolog (457 aa).

The region spanning 131–457 (RQVKLLLLGA…QRNLNALMLQ (327 aa)) is the G-alpha domain. The interval 134-147 (KLLLLGAGESGKST) is G1 motif. GTP is bound by residues 139-146 (GAGESGKS), 274-280 (LHCRKAT), 299-303 (DVGGQ), 369-372 (NKTD), and A429. The Mg(2+) site is built by S146 and T280. The interval 272–280 (DILHCRKAT) is G2 motif. Residues 295–304 (FVFVDVGGQR) form a G3 motif region. The interval 365-372 (ILFLNKTD) is G4 motif. Positions 427–432 (TTAIDT) are G5 motif.

Belongs to the G-alpha family. G(12) subfamily. In terms of assembly, g proteins are composed of 3 units; alpha, beta and gamma. The alpha chain contains the guanine nucleotide binding site. In terms of tissue distribution, in ovary, expressed in nurse cells and oocyte. In early embryos, distributed uniformly. At the extended germband stage, accumulates in the mesoderm.

The protein resides in the cytoplasm. Functionally, may play a role in a signal transduction pathway used during gastrulation. Required specifically for the ventral furrow and posterior midgut invaginations, where it is necessary for coordinating cell shape changes. Its function is as follows. Guanine nucleotide-binding proteins (G proteins) are involved as modulators or transducers in various transmembrane signaling systems. The protein is Guanine nucleotide-binding protein subunit alpha homolog (cta) of Drosophila melanogaster (Fruit fly).